A 164-amino-acid polypeptide reads, in one-letter code: General odorant-binding protein 1 (164 aa).

A signal peptide spans 1-18 (MWKLVVVLTVNLLQGALT). Cystine bridges form between C37–C72, C68–C126, and C115–C135.

It belongs to the PBP/GOBP family. Homodimer. As to expression, antenna.

Its function is as follows. Present in the aqueous fluid surrounding olfactory sensory dendrites and are thought to aid in the capture and transport of hydrophobic odorants into and through this fluid. The sequence is that of General odorant-binding protein 1 from Bombyx mori (Silk moth).